We begin with the raw amino-acid sequence, 417 residues long: Gamma-glutamyl phosphate reductase (417 aa).

This sequence belongs to the gamma-glutamyl phosphate reductase family.

The protein resides in the cytoplasm. The catalysed reaction is L-glutamate 5-semialdehyde + phosphate + NADP(+) = L-glutamyl 5-phosphate + NADPH + H(+). It participates in amino-acid biosynthesis; L-proline biosynthesis; L-glutamate 5-semialdehyde from L-glutamate: step 2/2. Catalyzes the NADPH-dependent reduction of L-glutamate 5-phosphate into L-glutamate 5-semialdehyde and phosphate. The product spontaneously undergoes cyclization to form 1-pyrroline-5-carboxylate. The chain is Gamma-glutamyl phosphate reductase from Escherichia coli O157:H7.